We begin with the raw amino-acid sequence, 631 residues long: DNA mismatch repair protein MutL (631 aa).

Disordered regions lie at residues 337–362 and 400–429; these read PHSPQIDDSSPYVKPETESSAFELQS and AVQSNAFGSMSVPRETRSGSSGESRPRAEL.

This sequence belongs to the DNA mismatch repair MutL/HexB family.

Functionally, this protein is involved in the repair of mismatches in DNA. It is required for dam-dependent methyl-directed DNA mismatch repair. May act as a 'molecular matchmaker', a protein that promotes the formation of a stable complex between two or more DNA-binding proteins in an ATP-dependent manner without itself being part of a final effector complex. This is DNA mismatch repair protein MutL from Shewanella oneidensis (strain ATCC 700550 / JCM 31522 / CIP 106686 / LMG 19005 / NCIMB 14063 / MR-1).